We begin with the raw amino-acid sequence, 677 residues long: Serine/threonine-protein kinase YPK2/YKR2 (677 aa).

Residues 1–12 (MHSWRISKFKLG) are compositionally biased toward basic residues. The interval 1 to 115 (MHSWRISKFK…ETQGPSSESG (115 aa)) is disordered. Residues 41-56 (KHHDGSPKNHNHEHEH) show a composition bias toward basic and acidic residues. Polar residues-rich tracts occupy residues 61–93 (INTN…NDNS) and 101–115 (SQSS…SESG). A phosphothreonine mark is found at T63 and T66. S72 carries the post-translational modification Phosphoserine. The Protein kinase domain maps to 344-599 (FDLLKVIGKG…TDEIRNHPFF (256 aa)). ATP contacts are provided by residues 350 to 358 (IGKGSFGKV) and K373. D467 (proton acceptor) is an active-site residue. T499 is subject to Phosphothreonine. Position 501 is a phosphothreonine; by PKH2 (T501). One can recognise an AGC-kinase C-terminal domain in the interval 600-670 (KDISWKKLLL…IGDEQLGDSP (71 aa)). Phosphoserine; by TOR2 is present on S641. A Phosphoserine modification is found at S650. A Phosphothreonine; by TOR2 modification is found at T659. A Phosphoserine modification is found at S669.

This sequence belongs to the protein kinase superfamily. AGC Ser/Thr protein kinase family. RAC subfamily. In terms of processing, autophosphorylated. Phosphorylated by PKH2 and TOR2.

The protein resides in the cytoplasm. It catalyses the reaction L-seryl-[protein] + ATP = O-phospho-L-seryl-[protein] + ADP + H(+). The enzyme catalyses L-threonyl-[protein] + ATP = O-phospho-L-threonyl-[protein] + ADP + H(+). With respect to regulation, activated by phytosphingosine (PHS), a sphingoid long chain base. Activated by PKH2 phosphorylation. Kinase activity is regulated by TOR2 via direct phosphorylation of Ser-641 and Thr-659. Plays an essential role in the proliferation of yeast cells. Involved in a signaling pathway, required for optimal cell wall integrity, that acts in parallel with the PKC1-SLT2-dependent pathway. A substrate of TOR complex 2 (TORC2) and required for TORC2 to regulate spatial aspects of cell growth. Phosphorylation of residue Thr-501 is indispensable for function. May act as a downstream kinase in the sphingolipid-mediated signaling pathway. This Saccharomyces cerevisiae (strain ATCC 204508 / S288c) (Baker's yeast) protein is Serine/threonine-protein kinase YPK2/YKR2 (YPK2).